Here is a 259-residue protein sequence, read N- to C-terminus: MDKQTLVIKLGGALIENDEALTALFGTLKTFLDEQHRPLVLVHGGGCLVDDLLKGLGLSSTKKNGLRVTPFEQIPFIAGALAGTANKQMMAKAIATGIPAVGLCLADGGLCQVTQLDPDLGAVGDCQPGNPALVTGILAQGFLPVVSSIGITADGQLMNVNADQAATAIAEALGADLVMLSDVSGILDGKGKLVPQLNKATALDLMEKGVISDGMAVKVKAALHAAETLGKPVCVASWRYPDQLLKLLAGGAVGTQVTL.

Residues 45-46 (GG), Arg-67, and Asn-159 contribute to the substrate site.

The protein belongs to the acetylglutamate kinase family. ArgB subfamily.

It localises to the cytoplasm. It carries out the reaction N-acetyl-L-glutamate + ATP = N-acetyl-L-glutamyl 5-phosphate + ADP. It functions in the pathway amino-acid biosynthesis; L-arginine biosynthesis; N(2)-acetyl-L-ornithine from L-glutamate: step 2/4. Catalyzes the ATP-dependent phosphorylation of N-acetyl-L-glutamate. This is Acetylglutamate kinase from Aeromonas salmonicida (strain A449).